We begin with the raw amino-acid sequence, 139 residues long: Acyl carrier protein 5, chloroplastic (139 aa).

Residues M1–S54 constitute a chloroplast transit peptide. The Carrier domain occupies Q59–V134. S94 is modified (O-(pantetheine 4'-phosphoryl)serine).

This sequence belongs to the acyl carrier protein (ACP) family. In terms of processing, 4'-phosphopantetheine is transferred from CoA to a specific serine of apo-ACP by acpS. This modification is essential for activity because fatty acids are bound in thioester linkage to the sulfhydryl of the prosthetic group.

The protein resides in the plastid. Its subcellular location is the chloroplast. Carrier of the growing fatty acid chain in fatty acid biosynthesis. This Arabidopsis thaliana (Mouse-ear cress) protein is Acyl carrier protein 5, chloroplastic (ACP5).